The chain runs to 258 residues: L-aspartate dehydrogenase 1 (258 aa).

Residues Ala121 and Asn181 each coordinate NAD(+). His211 is a catalytic residue.

It belongs to the L-aspartate dehydrogenase family.

The enzyme catalyses L-aspartate + NADP(+) + H2O = oxaloacetate + NH4(+) + NADPH + H(+). It carries out the reaction L-aspartate + NAD(+) + H2O = oxaloacetate + NH4(+) + NADH + H(+). It participates in cofactor biosynthesis; NAD(+) biosynthesis; iminoaspartate from L-aspartate (dehydrogenase route): step 1/1. In terms of biological role, specifically catalyzes the NAD or NADP-dependent dehydrogenation of L-aspartate to iminoaspartate. The chain is L-aspartate dehydrogenase 1 from Bordetella bronchiseptica (strain ATCC BAA-588 / NCTC 13252 / RB50) (Alcaligenes bronchisepticus).